We begin with the raw amino-acid sequence, 628 residues long: RING finger protein 112 (628 aa).

The segment at 57 to 98 (CSICLERPREPISLDCGHDFCPRCFSTHRVPGCGPPCCPECR) adopts an RING-type zinc-finger fold. The segment at 132–628 (AVRAEPLLLV…GDREPLLQEE (497 aa)) is interaction with ZBTB16. A GB1/RHD3-type G domain is found at 167–409 (DTPVCLLAVL…RCPGYWSEGR (243 aa)). 318–319 (RD) contacts GTP. 2 helical membrane passes run 544 to 564 (LAAV…GVVG) and 577 to 597 (GMVA…GGGV).

Belongs to the TRAFAC class dynamin-like GTPase superfamily. GB1/RHD3 GTPase family. GB1 subfamily. Self-associates. Interacts with SP1 in an oxidative stress-regulated manner. Interacts with SIGMAR1 in an oxidative stress-regulated manner. Interacts with ZBTB16 (via C2H2-type zinc finger domains 1 and 2). Post-translationally, auto-ubiquitinated.

It is found in the membrane. The protein localises to the cytoplasm. The protein resides in the nucleus. It localises to the nuclear body. Its subcellular location is the nucleoplasm. It is found in the endosome. The protein localises to the cytoplasmic vesicle. The protein resides in the secretory vesicle. It localises to the synaptic vesicle. Its subcellular location is the postsynaptic density. It is found in the perikaryon. The protein localises to the cell projection. The protein resides in the neuron projection. It carries out the reaction S-ubiquitinyl-[E2 ubiquitin-conjugating enzyme]-L-cysteine + [acceptor protein]-L-lysine = [E2 ubiquitin-conjugating enzyme]-L-cysteine + N(6)-ubiquitinyl-[acceptor protein]-L-lysine.. The protein operates within protein modification; protein ubiquitination. In terms of biological role, E3 ubiquitin-protein ligase that plays an important role in neuronal differentiation, including neurogenesis and gliogenesis, during brain development. During embryonic development initiates neuronal differentiation by inducing cell cycle arrest at the G0/G1 phase through up-regulation of cell-cycle regulatory proteins. Plays a role not only in the fetal period during the development of the nervous system, but also in the adult brain, where it is involved in the maintenance of neural functions and protection of the nervous tissue cells from oxidative stress-induced damage. Exhibits GTPase and E3 ubiquitin-protein ligase activities. Regulates dendritic spine density and synaptic neurotransmission; its ability to hydrolyze GTP is involved in the maintenance of dendritic spine density. This Bos taurus (Bovine) protein is RING finger protein 112 (RNF112).